Here is a 155-residue protein sequence, read N- to C-terminus: Small ribosomal subunit protein uS9 (155 aa).

It belongs to the universal ribosomal protein uS9 family.

In Sinorhizobium medicae (strain WSM419) (Ensifer medicae), this protein is Small ribosomal subunit protein uS9.